The chain runs to 255 residues: NAD kinase (255 aa).

Residue aspartate 44 is the Proton acceptor of the active site. NAD(+) is bound by residues aspartate 44–glycine 45, histidine 49, asparagine 114–glutamate 115, aspartate 144, alanine 152, serine 155–serine 160, and glutamine 216.

This sequence belongs to the NAD kinase family. A divalent metal cation serves as cofactor.

It is found in the cytoplasm. The catalysed reaction is NAD(+) + ATP = ADP + NADP(+) + H(+). Functionally, involved in the regulation of the intracellular balance of NAD and NADP, and is a key enzyme in the biosynthesis of NADP. Catalyzes specifically the phosphorylation on 2'-hydroxyl of the adenosine moiety of NAD to yield NADP. The polypeptide is NAD kinase (Rickettsia peacockii (strain Rustic)).